Here is a 518-residue protein sequence, read N- to C-terminus: Protein FAM98A (518 aa).

2 disordered regions span residues 300 to 415 (GRVP…GHSS) and 434 to 518 (GSGY…HYTS). A compositionally biased stretch (basic and acidic residues) spans 302–311 (VPDRGGRPNE). 3 stretches are compositionally biased toward gly residues: residues 349 to 364 (GGRG…GGRG), 383 to 396 (WTDG…GYQD), and 405 to 415 (QPGGYHGGHSS). The segment covering 447–459 (RYQDGGHHGDRGG) has biased composition (basic and acidic residues). The span at 460–484 (GRGGRGGRGGRGGRAGQGGGWGGRG) shows a compositional bias: gly residues. The span at 488–504 (YHQGGQFEQHFQHGGYQ) shows a compositional bias: low complexity. Polar residues predominate over residues 505-518 (YNHSGFGQGRHYTS).

Belongs to the FAM98 family. Interacts (via N- and C-terminus) with DDX1. Interacts (via N- and C-terminus) with C14orf166. Interacts with FAM98B. Interacts with PLEKHM1 (via N- and C-terminus).

Its function is as follows. Positively stimulates PRMT1-induced protein arginine methylation. Involved in skeletal homeostasis. Positively regulates lysosome peripheral distribution and ruffled border formation in osteoclasts. The polypeptide is Protein FAM98A (Pongo abelii (Sumatran orangutan)).